We begin with the raw amino-acid sequence, 75 residues long: DNA-directed RNA polymerase subunit Rpo5 (75 aa).

The protein belongs to the archaeal Rpo5/eukaryotic RPB5 RNA polymerase subunit family. As to quaternary structure, part of the RNA polymerase complex.

The protein localises to the cytoplasm. The enzyme catalyses RNA(n) + a ribonucleoside 5'-triphosphate = RNA(n+1) + diphosphate. DNA-dependent RNA polymerase (RNAP) catalyzes the transcription of DNA into RNA using the four ribonucleoside triphosphates as substrates. The protein is DNA-directed RNA polymerase subunit Rpo5 of Halobacterium salinarum (strain ATCC 700922 / JCM 11081 / NRC-1) (Halobacterium halobium).